The primary structure comprises 271 residues: Thioredoxin-related transmembrane protein 2 homolog (271 aa).

Positions 1-28 (MTWKKQMALLAKPYYWVNILLAISYLLA) are cleaved as a signal peptide. Residues 29 to 102 (KKTQFICTRL…AILWAYADFR (74 aa)) are Extracellular-facing. The chain crosses the membrane as a helical span at residues 103-123 (YGLGFLLLCVLVGMVLPEPSY). The Thioredoxin domain occupies 112–262 (VLVGMVLPEP…YKEAIERLPI (151 aa)). Over 124-271 (RGPEHITYFR…IAPKEAKKVQ (148 aa)) the chain is Cytoplasmic. The Di-lysine motif signature appears at 268 to 271 (KKVQ).

The protein resides in the membrane. This is Thioredoxin-related transmembrane protein 2 homolog from Drosophila melanogaster (Fruit fly).